The chain runs to 658 residues: Integrator complex subunit 9 (658 aa).

A Glycyl lysine isopeptide (Lys-Gly) (interchain with G-Cter in SUMO2) cross-link involves residue lysine 58. The tract at residues aspartate 548–aspartate 573 is disordered. The Nuclear localization signal signature appears at lysine 566–arginine 570.

It belongs to the metallo-beta-lactamase superfamily. RNA-metabolizing metallo-beta-lactamase-like family. INTS9 subfamily. In terms of assembly, component of the Integrator complex, composed of core subunits INTS1, INTS2, INTS3, INTS4, INTS5, INTS6, INTS7, INTS8, INTS9/RC74, INTS10, INTS11/CPSF3L, INTS12, INTS13, INTS14 and INTS15. The core complex associates with protein phosphatase 2A subunits PPP2CA and PPP2R1A, to form the Integrator-PP2A (INTAC) complex. INTS9 is part of the RNA endonuclease subcomplex, composed of INTS4, INTS9, INTS11 and inositol hexakisphosphate (InsP6). Interacts with WDR73; interaction is required for the assembly of the RNA endonuclease subcomplex in the cytoplasm. Interacts with BRAT1; interaction is required for the assembly of the RNA endonuclease subcomplex. Interacts with ESRRB, ESRRB is not a core component of the Integrator complex and this association is a bridge for the interaction with the multiprotein complex Integrator; attracts the transcriptional machinery.

It localises to the nucleus. Its subcellular location is the cytoplasm. Component of the integrator complex, a multiprotein complex that terminates RNA polymerase II (Pol II) transcription in the promoter-proximal region of genes. The integrator complex provides a quality checkpoint during transcription elongation by driving premature transcription termination of transcripts that are unfavorably configured for transcriptional elongation: the complex terminates transcription by (1) catalyzing dephosphorylation of the C-terminal domain (CTD) of Pol II subunit POLR2A/RPB1 and SUPT5H/SPT5, (2) degrading the exiting nascent RNA transcript via endonuclease activity and (3) promoting the release of Pol II from bound DNA. The integrator complex is also involved in terminating the synthesis of non-coding Pol II transcripts, such as enhancer RNAs (eRNAs), small nuclear RNAs (snRNAs), telomerase RNAs and long non-coding RNAs (lncRNAs). Mediates recruitment of cytoplasmic dynein to the nuclear envelope, probably as component of the integrator complex. The protein is Integrator complex subunit 9 (INTS9) of Bos taurus (Bovine).